Consider the following 615-residue polypeptide: Chaperone protein DnaK (615 aa).

A Phosphothreonine; by autocatalysis modification is found at T174. The tract at residues 581–615 (QAAPKDGAEGDAKSADDNTVDGDFEEVDPNKDDKK) is disordered. The segment covering 586–596 (DGAEGDAKSAD) has biased composition (basic and acidic residues). Over residues 598–607 (NTVDGDFEEV) the composition is skewed to acidic residues.

It belongs to the heat shock protein 70 family.

In terms of biological role, acts as a chaperone. The sequence is that of Chaperone protein DnaK from Leuconostoc mesenteroides subsp. mesenteroides (strain ATCC 8293 / DSM 20343 / BCRC 11652 / CCM 1803 / JCM 6124 / NCDO 523 / NBRC 100496 / NCIMB 8023 / NCTC 12954 / NRRL B-1118 / 37Y).